We begin with the raw amino-acid sequence, 347 residues long: Ataxin-7-like protein 3 (347 aa).

The segment at 84–105 (CVCPNCSRSIAASRFAPHLEKC) adopts an SGF11-type zinc-finger fold. A compositionally biased stretch (low complexity) spans 116–125 (ANRRIANSNN). Residues 116 to 184 (ANRRIANSNN…GELSNSDPFK (69 aa)) form a disordered region. Phosphoserine is present on residues Ser129 and Ser131. The segment covering 132 to 141 (DQEDNDDIND) has biased composition (acidic residues). The 68-residue stretch at 196-263 (LGPEELRSLL…SLDNDSFDMT (68 aa)) folds into the SCA7 domain. The segment covering 275–288 (DGSSDLSPSDSGSS) has biased composition (low complexity). The interval 275–347 (DGSSDLSPSD…PTPSIYDDIN (73 aa)) is disordered. Phosphoserine is present on residues Ser278, Ser281, and Ser326.

This sequence belongs to the SGF11 family. As to quaternary structure, component of some SAGA transcription coactivator-HAT complexes, at least composed of ATXN7, ATXN7L3, ENY2, GCN5L2, SUPT3H, TAF10, TRRAP and USP22. Within the SAGA complex, ENY2, ATXN7, ATXN7L3, and USP22 form an additional subcomplex of SAGA called the DUB module (deubiquitination module). Interacts directly with ENY2 and USP22.

The protein resides in the nucleus. Functionally, component of the transcription regulatory histone acetylation (HAT) complex SAGA, a multiprotein complex that activates transcription by remodeling chromatin and mediating histone acetylation and deubiquitination. Within the SAGA complex, participates in a subcomplex that specifically deubiquitinates both histones H2A and H2B. The SAGA complex is recruited to specific gene promoters by activators such as MYC, where it is required for transcription. Required for nuclear receptor-mediated transactivation. Within the complex, it is required to recruit USP22 and ENY2 into the SAGA complex. Regulates H2B monoubiquitination (H2Bub1) levels. Affects subcellular distribution of ENY2, USP22 and ATXN7L3B. The polypeptide is Ataxin-7-like protein 3 (Homo sapiens (Human)).